The following is a 105-amino-acid chain: Unclassified hydrophobin D (105 aa).

The N-terminal stretch at 1–18 is a signal peptide; that stretch reads MKFYIVLLALAAFAMAEA. Cystine bridges form between cysteine 35-cysteine 86, cysteine 42-cysteine 83, and cysteine 43-cysteine 49.

Its subcellular location is the secreted. It is found in the cell wall. In terms of biological role, aerial growth, conidiation, and dispersal of filamentous fungi in the environment rely upon a capability of their secreting small amphipathic proteins called hydrophobins (HPBs) with low sequence identity. Class I can self-assemble into an outermost layer of rodlet bundles on aerial cell surfaces, conferring cellular hydrophobicity that supports fungal growth, development and dispersal; whereas Class II form highly ordered films at water-air interfaces through intermolecular interactions but contribute nothing to the rodlet structure. In P.expansum, hydrophobins contribute to germination, tolerance to cold stress and mycotoxins patulin and citrinin production. This chain is Unclassified hydrophobin D, found in Penicillium expansum (Blue mold rot fungus).